A 467-amino-acid chain; its full sequence is UDP-N-acetylmuramate--L-alanine ligase (467 aa).

ATP is bound at residue 114 to 120 (GTHGKTT).

It belongs to the MurCDEF family.

The protein localises to the cytoplasm. It catalyses the reaction UDP-N-acetyl-alpha-D-muramate + L-alanine + ATP = UDP-N-acetyl-alpha-D-muramoyl-L-alanine + ADP + phosphate + H(+). It participates in cell wall biogenesis; peptidoglycan biosynthesis. Functionally, cell wall formation. The polypeptide is UDP-N-acetylmuramate--L-alanine ligase (Rhodopseudomonas palustris (strain ATCC BAA-98 / CGA009)).